Consider the following 379-residue polypeptide: NADH-rubredoxin oxidoreductase (379 aa).

2 disulfide bridges follow: C26–C286 and C137–C216. Residues N33–E35, R42, A79, and Y125 contribute to the FAD site. D259 lines the FAD pocket.

This sequence belongs to the FAD-dependent oxidoreductase family. Monomer. FAD is required as a cofactor.

It carries out the reaction 2 reduced [rubredoxin] + NAD(+) + H(+) = 2 oxidized [rubredoxin] + NADH. Its function is as follows. Catalyzes the NADH-dependent reduction of rubredoxin (Rd). NADPH is a very poor electron donor compared to NADH. Functions as an intermediate component in the electron transfer chain: NADH-&gt;NROR-&gt;Rd-&gt;FprA1/2. Also functions as an intermediate component in the electron transfer chains from NADH to revRbr and Dfx. Therefore, is a key electron carrier in an efficient multienzyme complex that can scavenge O(2) and reactive oxygen species (ROS), and thus plays an important role in the oxidative stress defense system in C.acetobutylicum, an obligate anaerobic bacterium. This is NADH-rubredoxin oxidoreductase (nroR) from Clostridium acetobutylicum (strain ATCC 824 / DSM 792 / JCM 1419 / IAM 19013 / LMG 5710 / NBRC 13948 / NRRL B-527 / VKM B-1787 / 2291 / W).